Reading from the N-terminus, the 111-residue chain is WAP four-disulfide core domain protein 12 (111 aa).

Positions 1 to 23 (MRSSRFLVLMVSLALVTLVASEG) are cleaved as a signal peptide. The WAP domain maps to 27–74 (NTEKPGVCPADNVRCIKSDPPQCHTDQDCQGIRKCCYLHCGFKCVIPV). Intrachain disulfides connect Cys-34/Cys-62, Cys-41/Cys-66, Cys-49/Cys-61, and Cys-55/Cys-70.

The protein resides in the secreted. Its function is as follows. Antibacterial protein. Putative acid-stable proteinase inhibitor. In Saimiri boliviensis boliviensis (Bolivian squirrel monkey), this protein is WAP four-disulfide core domain protein 12 (WFDC12).